The following is a 184-amino-acid chain: Fungal defensin copsin (184 aa).

The signal sequence occupies residues 1–23; that stretch reads MKLSTSLLAIVAVASTFIGNALS. A propeptide spanning residues 24 to 127 is cleaved from the precursor; sequence ATTVPGCFAE…LGRVLPVEKR (104 aa). Glutamine 128 carries the pyrrolidone carboxylic acid modification. Disulfide bonds link cysteine 130/cysteine 159, cysteine 137/cysteine 167, cysteine 145/cysteine 175, cysteine 149/cysteine 177, cysteine 152/cysteine 184, and cysteine 162/cysteine 181.

It belongs to the invertebrate defensin family. In terms of processing, contains a unique connectivity of 6 cysteine bonds in contrast to most other CS-alpha-beta defensins which are linked by 3 or 4 disulfide bonds. Post-translationally, disulfide bonds are essential for structural integrity and antibacterial activity, since activity is lost after treatment with reducing agents. Thanks to disulfide bonds and N-terminal pyroglutamate, the protein is extremely stable in a wide pH and temperature range and insensitive toward proteases.

It localises to the secreted. The protein resides in the target cell membrane. Its function is as follows. Antimicrobial peptide that acts against Gram-positive bacteria (Listeria spp., Enterococcus spp., B.subtilis, B.anthracis, P.aeruginosa). Is not active against Gram-negative bacteria. It selectively inhibits peptidoglycan biosynthesis through complex formation with the cell wall precursor lipid II (1:1 molar ratio), probably anchoring lipid II to the membrane, thus inhibiting cell wall synthesis. The interaction with lipid II involves the third position of the pentapeptide. Shows bactericidal activity at about 2-fold minimal inhibitory concentrations (MIC), but does not form pore across the membrane. This is Fungal defensin copsin from Coprinopsis cinerea (Inky cap fungus).